Consider the following 468-residue polypeptide: MSAKTLYDKLFDSHVVREENGAALIYIDRHLVHEVTSPQAFEGLKMAGRKLWRVNSVLAVPDHNVPTTDRSHGIADPISRLQVETLDQNCRDFGVTEFRMGDVRQGIVHVMGPEQGATLPGMTVVCGDSHTSTHGAFGALAHGIGTSEVEHVMATQCLVQKKSKAMQIRVEGQLGPGVTAKDVALAIIGKIGTAGGTGYAIEFAGSAIRSLSMEGRMTLCNMAIEAGARAGMVAVDDVTINYVKGRPYAPKPEQWDAAVAYWRTLHSDEGAKFDAVVEIKAEDIEPQVTWGTSPEMVTAINSIVPDPSKESDPTKRSGMERALQYMGLQPNTPISDIPIDKVFIGSCTNSRIEDLRAAAAVAKGKHVAPNVKLAMVVPGSGLVKAQAEQEGLDKIFKEAGFEWREPGCSMCLAMNADRLEPGERCASTSNRNFEGRQGAGGRTHLVSPGMAAAAAVAGHFIDVRQLLN.

Residues cysteine 347, cysteine 408, and cysteine 411 each coordinate [4Fe-4S] cluster.

The protein belongs to the aconitase/IPM isomerase family. LeuC type 1 subfamily. Heterodimer of LeuC and LeuD. It depends on [4Fe-4S] cluster as a cofactor.

The enzyme catalyses (2R,3S)-3-isopropylmalate = (2S)-2-isopropylmalate. The protein operates within amino-acid biosynthesis; L-leucine biosynthesis; L-leucine from 3-methyl-2-oxobutanoate: step 2/4. Its function is as follows. Catalyzes the isomerization between 2-isopropylmalate and 3-isopropylmalate, via the formation of 2-isopropylmaleate. The sequence is that of 3-isopropylmalate dehydratase large subunit from Methylobacillus flagellatus (strain ATCC 51484 / DSM 6875 / VKM B-1610 / KT).